Here is a 299-residue protein sequence, read N- to C-terminus: ATP phosphoribosyltransferase (299 aa).

It belongs to the ATP phosphoribosyltransferase family. Long subfamily. As to quaternary structure, equilibrium between an active dimeric form, an inactive hexameric form and higher aggregates. Interconversion between the various forms is largely reversible and is influenced by the natural substrates and inhibitors of the enzyme. Requires Mg(2+) as cofactor.

It localises to the cytoplasm. It catalyses the reaction 1-(5-phospho-beta-D-ribosyl)-ATP + diphosphate = 5-phospho-alpha-D-ribose 1-diphosphate + ATP. It participates in amino-acid biosynthesis; L-histidine biosynthesis; L-histidine from 5-phospho-alpha-D-ribose 1-diphosphate: step 1/9. With respect to regulation, feedback inhibited by histidine. Functionally, catalyzes the condensation of ATP and 5-phosphoribose 1-diphosphate to form N'-(5'-phosphoribosyl)-ATP (PR-ATP). Has a crucial role in the pathway because the rate of histidine biosynthesis seems to be controlled primarily by regulation of HisG enzymatic activity. In Blochmanniella pennsylvanica (strain BPEN), this protein is ATP phosphoribosyltransferase.